The following is a 296-amino-acid chain: Phosphoribosylaminoimidazole-succinocarboxamide synthase (296 aa).

This sequence belongs to the SAICAR synthetase family.

It catalyses the reaction 5-amino-1-(5-phospho-D-ribosyl)imidazole-4-carboxylate + L-aspartate + ATP = (2S)-2-[5-amino-1-(5-phospho-beta-D-ribosyl)imidazole-4-carboxamido]succinate + ADP + phosphate + 2 H(+). It functions in the pathway purine metabolism; IMP biosynthesis via de novo pathway; 5-amino-1-(5-phospho-D-ribosyl)imidazole-4-carboxamide from 5-amino-1-(5-phospho-D-ribosyl)imidazole-4-carboxylate: step 1/2. This chain is Phosphoribosylaminoimidazole-succinocarboxamide synthase, found in Geobacter sp. (strain M21).